The chain runs to 331 residues: UPF0194 membrane protein YbhG (331 aa).

An N-terminal signal peptide occupies residues 1–19; that stretch reads MKKPVVIGLAIAAIVAVIA. The stretch at 107–208 forms a coiled coil; the sequence is EEIAQAAAAV…LDLQDTTLIA (102 aa).

Belongs to the UPF0194 family.

It localises to the periplasm. This Salmonella paratyphi A (strain ATCC 9150 / SARB42) protein is UPF0194 membrane protein YbhG.